A 243-amino-acid polypeptide reads, in one-letter code: Probable phosphatase CLD_1129 (243 aa).

Zn(2+) contacts are provided by His8, His10, His16, His41, Glu74, His102, His132, Asp192, and His194.

Belongs to the PHP family. Zn(2+) serves as cofactor.

The polypeptide is Probable phosphatase CLD_1129 (Clostridium botulinum (strain Okra / Type B1)).